Reading from the N-terminus, the 522-residue chain is Circadian clock oscillator protein KaiC (522 aa).

KaiC domains lie at 1-248 (MKKS…INIF) and 262-522 (ARVS…DDLL). Positions 50, 51, 52, 53, 54, 90, 225, 226, 227, 229, 231, 241, 242, 291, 292, 293, 294, 295, 296, and 297 each coordinate ATP. Mg(2+) is bound at residue Thr54. Thr296 lines the Mg(2+) pocket. Glu319 contributes to the Mg(2+) binding site. Trp332 contributes to the ATP binding site. Phosphoserine; by autocatalysis is present on Ser432. Position 433 is a phosphothreonine; by autocatalysis (Thr433). Arg452, Lys458, Met459, Arg460, Ser462, His464, and Lys466 together coordinate ATP.

The protein belongs to the KaiC family. In terms of assembly, homohexamer; hexamerization is dependent on ATP-binding. The KaiABC complex composition changes during the circadian cycle to control KaiC phosphorylation. Complexes KaiC(6), KaiA(2-4):KaiC(6), KaiB(6):KaiC(6) and KaiC(6):KaiB(6):KaiA(12) are among the most important forms, many form cooperatively. KaiC interacts with SasA, activating its autokinase function and leading to RpaA activation. Mg(2+) is required as a cofactor. In terms of processing, phosphorylated on serine and threonine residues by autocatalysis. Has a 4 step phosphorylation cycle; the autokinase acts first on Thr-433, then Ser-432. When Ser-432 is modified KaiC switches to an autophosphatase mode, acting first on phospho-Thr-433 then phospho-Ser-432.

The enzyme catalyses L-seryl-[protein] + ATP = O-phospho-L-seryl-[protein] + ADP + H(+). It catalyses the reaction L-threonyl-[protein] + ATP = O-phospho-L-threonyl-[protein] + ADP + H(+). It carries out the reaction ATP + H2O = ADP + phosphate + H(+). The interaction with KaiA enhances its phosphorylation status, while the interaction with KaiB decreases it. Functionally, central component of the KaiABC oscillator complex, which constitutes the main circadian regulator in cyanobacteria. Complex composition changes during the circadian cycle to control KaiC phosphorylation. KaiA stimulates KaiC autophosphorylation, while KaiB sequesters KaiA, leading to KaiC autodephosphorylation. Clock output pathways impact the RpaA transcriptional regulator. KaiC enhances the autophosphorylation activity of SasA, which then transfers its phosphate group to RpaA to activate it. KaiB and KaiC together enhance the phospho-RpaA dephosphatase activity of CikA. Has a weak, temperature-independent ATPase activity; ATPase activity defines the circadian period. The phosphorylation state of KaiC modulates its ATPase activity and effects KaiB binding. This is Circadian clock oscillator protein KaiC from Acaryochloris marina (strain MBIC 11017).